The following is a 348-amino-acid chain: 4-hydroxy-2-oxovalerate aldolase (348 aa).

Residues 9–261 (ITVHDMTLRD…RTGVDVWKIQ (253 aa)) form the Pyruvate carboxyltransferase domain. 17 to 18 (RD) is a substrate binding site. D18 provides a ligand contact to Mn(2+). H21 (proton acceptor) is an active-site residue. Positions 171 and 200 each coordinate substrate. Positions 200 and 202 each coordinate Mn(2+). A substrate-binding site is contributed by Y291.

Belongs to the 4-hydroxy-2-oxovalerate aldolase family.

It catalyses the reaction (S)-4-hydroxy-2-oxopentanoate = acetaldehyde + pyruvate. In Ralstonia pickettii (strain 12J), this protein is 4-hydroxy-2-oxovalerate aldolase.